Reading from the N-terminus, the 1603-residue chain is Pentafunctional AROM polypeptide (1603 aa).

A 3-dehydroquinate synthase region spans residues 1–384 (MGVPTKISIL…YEPRASTVSN (384 aa)). Residues 44 to 46 (DTN), 81 to 84 (ESSK), 114 to 116 (GGV), and Asp119 contribute to the NAD(+) site. A 7-phospho-2-dehydro-3-deoxy-D-arabino-heptonate-binding site is contributed by Arg130. Position 139 to 140 (139 to 140 (TT)) interacts with NAD(+). Asp146 and Lys152 together coordinate 7-phospho-2-dehydro-3-deoxy-D-arabino-heptonate. Lys161 is an NAD(+) binding site. Asn162 contributes to the 7-phospho-2-dehydro-3-deoxy-D-arabino-heptonate binding site. NAD(+)-binding positions include 179 to 182 (FLNT) and Asn190. Residue Glu194 participates in Zn(2+) binding. 7-phospho-2-dehydro-3-deoxy-D-arabino-heptonate contacts are provided by residues 194–197 (EVIK) and Lys250. Glu260 serves as the catalytic Proton acceptor; for 3-dehydroquinate synthase activity. Residues 264-268 (RNLLN) and His271 contribute to the 7-phospho-2-dehydro-3-deoxy-D-arabino-heptonate site. His271 provides a ligand contact to Zn(2+). The Proton acceptor; for 3-dehydroquinate synthase activity role is filled by His275. Residues His287 and Lys356 each contribute to the 7-phospho-2-dehydro-3-deoxy-D-arabino-heptonate site. Residue His287 participates in Zn(2+) binding. The segment at 397–842 (VYPGFPKSLN…WNTLAQTFKV (446 aa)) is EPSP synthase. Cys824 (for EPSP synthase activity) is an active-site residue. Residues 872–1064 (AASIFIIGMR…RRKENTFFVS (193 aa)) form a shikimate kinase region. An ATP-binding site is contributed by 879 to 886 (GMRGAGKT). The interval 1065–1285 (LTFPDLTPAS…AAPGQLSARE (221 aa)) is 3-dehydroquinase. His1188 functions as the Proton acceptor; for 3-dehydroquinate dehydratase activity in the catalytic mechanism. Catalysis depends on Lys1216, which acts as the Schiff-base intermediate with substrate; for 3-dehydroquinate dehydratase activity. The shikimate dehydrogenase stretch occupies residues 1298–1603 (AKKFAVIGKP…GVSSSDDTIS (306 aa)).

In the N-terminal section; belongs to the sugar phosphate cyclases superfamily. Dehydroquinate synthase family. The protein in the 2nd section; belongs to the EPSP synthase family. It in the 3rd section; belongs to the shikimate kinase family. This sequence in the 4th section; belongs to the type-I 3-dehydroquinase family. In the C-terminal section; belongs to the shikimate dehydrogenase family. As to quaternary structure, homodimer. Zn(2+) serves as cofactor.

It localises to the cytoplasm. It catalyses the reaction 7-phospho-2-dehydro-3-deoxy-D-arabino-heptonate = 3-dehydroquinate + phosphate. The enzyme catalyses 3-dehydroquinate = 3-dehydroshikimate + H2O. It carries out the reaction shikimate + NADP(+) = 3-dehydroshikimate + NADPH + H(+). The catalysed reaction is shikimate + ATP = 3-phosphoshikimate + ADP + H(+). It catalyses the reaction 3-phosphoshikimate + phosphoenolpyruvate = 5-O-(1-carboxyvinyl)-3-phosphoshikimate + phosphate. It functions in the pathway metabolic intermediate biosynthesis; chorismate biosynthesis; chorismate from D-erythrose 4-phosphate and phosphoenolpyruvate: step 2/7. It participates in metabolic intermediate biosynthesis; chorismate biosynthesis; chorismate from D-erythrose 4-phosphate and phosphoenolpyruvate: step 3/7. Its pathway is metabolic intermediate biosynthesis; chorismate biosynthesis; chorismate from D-erythrose 4-phosphate and phosphoenolpyruvate: step 4/7. The protein operates within metabolic intermediate biosynthesis; chorismate biosynthesis; chorismate from D-erythrose 4-phosphate and phosphoenolpyruvate: step 5/7. It functions in the pathway metabolic intermediate biosynthesis; chorismate biosynthesis; chorismate from D-erythrose 4-phosphate and phosphoenolpyruvate: step 6/7. Functionally, the AROM polypeptide catalyzes 5 consecutive enzymatic reactions in prechorismate polyaromatic amino acid biosynthesis. The chain is Pentafunctional AROM polypeptide from Paracoccidioides brasiliensis (strain Pb03).